The sequence spans 327 residues: 2-methoxy-6-polyprenyl-1,4-benzoquinol methylase, mitochondrial (327 aa).

The N-terminal 43 residues, 1-43 (MAAPIRAFVLRVLSDSTRNIHHVLRCRSKYLCRRAAITARRGY), are a transit peptide targeting the mitochondrion. Residues threonine 117, aspartate 171, and 199-200 (DA) contribute to the S-adenosyl-L-methionine site.

It belongs to the class I-like SAM-binding methyltransferase superfamily. MenG/UbiE family. As to quaternary structure, component of a multi-subunit COQ enzyme complex, composed of at least coq3, coq4, coq5, coq6, coq7 and coq9.

The protein resides in the mitochondrion inner membrane. It catalyses the reaction a 2-methoxy-6-(all-trans-polyprenyl)benzene-1,4-diol + S-adenosyl-L-methionine = a 5-methoxy-2-methyl-3-(all-trans-polyprenyl)benzene-1,4-diol + S-adenosyl-L-homocysteine + H(+). It functions in the pathway cofactor biosynthesis; ubiquinone biosynthesis. Functionally, methyltransferase required for the conversion of 2-polyprenyl-6-methoxy-1,4-benzoquinol (DDMQH2) to 2-polyprenyl-3-methyl-6-methoxy-1,4-benzoquinol (DMQH2). The protein is 2-methoxy-6-polyprenyl-1,4-benzoquinol methylase, mitochondrial of Danio rerio (Zebrafish).